Reading from the N-terminus, the 448-residue chain is MQASDSSINTLDGHQVSAGRDESTPLLANSPQRRSSGGTSFGFAVFNLMNAIMGSGILGLSYAMAKTGILGFSALLLIVALLAAYSIHLLLRMCLLTAVTSYEDLGLYAFGRSGKVLVACTILIQNVGAMSSYLFIIKSELPAAIASFLPGAQGEPWYLDGRTLLIITSVCIVLPLALLPKIGFLGYTSSLSFFFMVYFAVVIVIKKWNIPCPLPPLNHTVTFLQAPNISECKPKLFDFSKESAFALPTMAFSFLCHTSVLPIYCELKSPSKSKMQNVANVGIALSFLIYYISALFGYLTFYDNVKSELLQGYSKYLPKDVLIITVRLCILLAVLLTVPLIHFPARKAVMMMFFSRYPFSYIRHILVTLVLNIIIVLLAIYVPDMRSVFGVVGSTTSTCLLFVFPGLFYVKLGREDCSSPQKFGACGLLVLGICIGACSLTLIIMNLA.

Composition is skewed to polar residues over residues 1 to 12 and 26 to 36; these read MQASDSSINTLD and LLANSPQRRSS. The tract at residues 1-36 is disordered; sequence MQASDSSINTLDGHQVSAGRDESTPLLANSPQRRSS. Helical transmembrane passes span 40–60, 69–89, 117–137, 164–184, and 185–205; these read SFGFAVFNLMNAIMGSGILGL, ILGFSALLLIVALLAAYSIHL, LVACTILIQNVGAMSSYLFII, LLIITSVCIVLPLALLPKIGF, and LGYTSSLSFFFMVYFAVVIVI. Cys-212 and Cys-232 are oxidised to a cystine. 2 N-linked (GlcNAc...) asparagine glycosylation sites follow: Asn-218 and Asn-228. 6 helical membrane passes run 244–264, 281–301, 321–341, 365–385, 388–408, and 425–445; these read AFALPTMAFSFLCHTSVLPIY, VGIALSFLIYYISALFGYLTF, VLIITVRLCILLAVLLTVPLI, ILVTLVLNIIIVLLAIYVPDM, VFGVVGSTTSTCLLFVFPGLF, and ACGLLVLGICIGACSLTLIIM.

The protein belongs to the amino acid/polyamine transporter 2 family.

The protein resides in the cell membrane. Probable sodium-dependent amino acid/proton antiporter, could be a neuronal transporter for glutamate. The polypeptide is Probable sodium-coupled neutral amino acid transporter 6 (slc38a6) (Xenopus tropicalis (Western clawed frog)).